We begin with the raw amino-acid sequence, 1161 residues long: ATP-dependent helicase/deoxyribonuclease subunit B (1161 aa).

This sequence belongs to the helicase family. AddB/RexB type 2 subfamily. As to quaternary structure, heterodimer of AddA and RexB. Requires Mg(2+) as cofactor.

The heterodimer acts as both an ATP-dependent DNA helicase and an ATP-dependent, dual-direction single-stranded exonuclease. Recognizes the chi site generating a DNA molecule suitable for the initiation of homologous recombination. This subunit has 5' -&gt; 3' nuclease activity but not helicase activity. This chain is ATP-dependent helicase/deoxyribonuclease subunit B, found in Oenococcus oeni (strain ATCC BAA-331 / PSU-1).